The primary structure comprises 947 residues: ATPase 10, plasma membrane-type (947 aa).

The Cytoplasmic portion of the chain corresponds to 1–69; the sequence is MAEDLDKPLL…EKQENRFVKF (69 aa). Residues 70-89 form a helical membrane-spanning segment; sequence LGFMWNPLSWVMEAAALMAI. The Extracellular segment spans residues 90-101; it reads ALANSQSLGPDW. A helical membrane pass occupies residues 102–122; sequence EDFTGIVCLLLINATISFFEE. The Cytoplasmic segment spans residues 123 to 251; that stretch reads NNAGNAAAAL…GHFQQVLTSI (129 aa). A helical membrane pass occupies residues 252–272; the sequence is GNFCICSIAVGMVLEIIIMFP. At 273 to 281 the chain is on the extracellular side; the sequence is VQHRSYRIG. Residues 282–299 form a helical membrane-spanning segment; the sequence is INNLLVLLIGGIPIAMPT. Residues 300 to 650 lie on the Cytoplasmic side of the membrane; sequence VLSVTLAIGS…TSRAIFQRMR (351 aa). Residue Asp-337 is the 4-aspartylphosphate intermediate of the active site. The Mg(2+) site is built by Asp-595 and Asp-599. The helical transmembrane segment at 651-672 threads the bilayer; it reads NYTVYAVSITIRIVLGFTLLAL. The Extracellular segment spans residues 673 to 677; it reads IWEYD. Residues 678-700 form a helical membrane-spanning segment; sequence FPPFMVLIIAILNDGTIMTISKD. Topologically, residues 701-716 are cytoplasmic; the sequence is RVRPSPTPESWKLNQI. Residues 717-737 traverse the membrane as a helical segment; that stretch reads FATGIVIGTYLALVTVLFYWI. Topologically, residues 738-758 are extracellular; that stretch reads IVSTTFFEKHFHVKSIANNSE. A helical transmembrane segment spans residues 759-779; that stretch reads QVSSAMYLQVSIISQALIFVT. Topologically, residues 780-791 are cytoplasmic; that stretch reads RSRGWSFFERPG. Residues 792–812 traverse the membrane as a helical segment; the sequence is TLLIFAFILAQLAATLIAVYA. Residues 813–820 lie on the Extracellular side of the membrane; sequence NISFAKIT. Residues 821 to 841 form a helical membrane-spanning segment; it reads GIGWRWAGVIWLYSLIFYIPL. Residues 842–947 are Cytoplasmic-facing; that stretch reads DVIKFVFHYA…QRMIRAAHTV (106 aa). Phosphoserine occurs at positions 897 and 929. The residue at position 946 (Thr-946) is a Phosphothreonine.

It belongs to the cation transport ATPase (P-type) (TC 3.A.3) family. Type IIIA subfamily. Found primarily in developing seeds. Expressed in guard cells, mesophyll cells, leaves and roots.

It localises to the membrane. It carries out the reaction ATP + H2O + H(+)(in) = ADP + phosphate + 2 H(+)(out). Functionally, the plasma membrane H(+) ATPase of plants and fungi generates a proton gradient that drives the active transport of nutrients by H(+)-symport. The resulting external acidification and/or internal alkinization may mediate growth responses. The sequence is that of ATPase 10, plasma membrane-type (AHA10) from Arabidopsis thaliana (Mouse-ear cress).